The chain runs to 218 residues: Glutathione S-transferase Mu 1 (218 aa).

The 87-residue stretch at 2-88 (PMILGYWNVR…YLARKHHLCG (87 aa)) folds into the GST N-terminal domain. Glutathione contacts are provided by residues 7 to 8 (YW), 43 to 46 (RSQW), Lys-50, and 59 to 60 (NL). Residue Ser-67 is modified to Phosphoserine. 72–73 (QS) is a glutathione binding site. A GST C-terminal domain is found at 90–208 (TEEERIRADI…KSSRYLSTPI (119 aa)). Tyr-116 contributes to the substrate binding site. Ser-205 and Ser-210 each carry phosphoserine.

This sequence belongs to the GST superfamily. Mu family. Homodimer or heterodimer.

The protein resides in the cytoplasm. The catalysed reaction is RX + glutathione = an S-substituted glutathione + a halide anion + H(+). It catalyses the reaction prostaglandin A2 + glutathione = prostaglandin A2-S-(R)-glutathione. The enzyme catalyses prostaglandin J2 + glutathione = prostaglandin J2-S-(R)-glutathione. It carries out the reaction prostaglandin J2 + glutathione = prostaglandin J2-S-(S)-glutathione. The catalysed reaction is prostaglandin A2 + glutathione = prostaglandin A2-S-(S)-glutathione. It catalyses the reaction 11(S)-hydroxy-14(S),15(S)-epoxy-(5Z,8Z,12E)-eicosatrienoate + glutathione = (11S,15S)-dihydroxy-14(R)-S-glutathionyl-(5Z,8Z,12E)-eicosatrienoate. In terms of biological role, conjugation of reduced glutathione to a wide number of exogenous and endogenous hydrophobic electrophiles. The olfactory GST may be crucial for the acuity of the olfactory process. Participates in the formation of novel hepoxilin regioisomers. In Rattus norvegicus (Rat), this protein is Glutathione S-transferase Mu 1.